The sequence spans 518 residues: Cytochrome P450 monooxygenase psoD (518 aa).

Cys-442 provides a ligand contact to heme.

Belongs to the cytochrome P450 family. Requires heme as cofactor.

It functions in the pathway secondary metabolite biosynthesis. Functionally, cytochrome P450 monooxygenase; part of the gene cluster that mediates the biosynthesis of pseurotin A, a competitive inhibitor of chitin synthase and an inducer of nerve-cell proliferation. The PKS-NRPS hybrid synthetase psoA is responsible for the biosynthesis of azaspirene, one of the first intermediates having the 1-oxa-7-azaspiro[4,4]-non-2-ene-4,6-dione core of pseurotin, via condensation of one acetyl-CoA, 4 malonyl-CoA, and a L-phenylalanine molecule. The dual-functional monooxygenase/methyltransferase psoF seems to be involved in the addition of the C3 methyl group onto the pseurotin scaffold. Azaspirene is then converted to synerazol through 4 steps including oxidation of C17 by the cytochrome P450 monooxygenase psoD, O-methylation of the hydroxy group of C8 by the methyltransferase psoC, and the trans-to-cis isomerization of the C13 olefin by the glutathione S-transferase psoE. The fourth step of synerazol production is performed by the dual-functional monooxygenase/methyltransferase psoF which seems to catalyze the epoxidation of the intermediate deepoxy-synerazol. Synerazol can be attacked by a water molecule nonenzymatically at two different positions to yield two diol products, pseurotin A and pseurotin D. The sequence is that of Cytochrome P450 monooxygenase psoD from Aspergillus fumigatus (strain ATCC MYA-4609 / CBS 101355 / FGSC A1100 / Af293) (Neosartorya fumigata).